A 205-amino-acid polypeptide reads, in one-letter code: Methyltransferase-like 26 B (205 aa).

The protein belongs to the UPF0585 family.

This Danio rerio (Zebrafish) protein is Methyltransferase-like 26 B.